The sequence spans 204 residues: Holliday junction branch migration complex subunit RuvA (204 aa).

The segment at 1-64 (MIAQLKGSLA…EDAFLLYGFH (64 aa)) is domain I. Residues 65–143 (SESQRKVFNL…ALPMAAPTTA (79 aa)) are domain II. The segment at 144 to 154 (IGAATMAANPA) is flexible linker. The segment at 154–204 (AGLREEVASALLNLGYKPPQVDAALAKLFSAGEITDISVALKGALKLLAPA) is domain III.

This sequence belongs to the RuvA family. As to quaternary structure, homotetramer. Forms an RuvA(8)-RuvB(12)-Holliday junction (HJ) complex. HJ DNA is sandwiched between 2 RuvA tetramers; dsDNA enters through RuvA and exits via RuvB. An RuvB hexamer assembles on each DNA strand where it exits the tetramer. Each RuvB hexamer is contacted by two RuvA subunits (via domain III) on 2 adjacent RuvB subunits; this complex drives branch migration. In the full resolvosome a probable DNA-RuvA(4)-RuvB(12)-RuvC(2) complex forms which resolves the HJ.

Its subcellular location is the cytoplasm. Functionally, the RuvA-RuvB-RuvC complex processes Holliday junction (HJ) DNA during genetic recombination and DNA repair, while the RuvA-RuvB complex plays an important role in the rescue of blocked DNA replication forks via replication fork reversal (RFR). RuvA specifically binds to HJ cruciform DNA, conferring on it an open structure. The RuvB hexamer acts as an ATP-dependent pump, pulling dsDNA into and through the RuvAB complex. HJ branch migration allows RuvC to scan DNA until it finds its consensus sequence, where it cleaves and resolves the cruciform DNA. This chain is Holliday junction branch migration complex subunit RuvA, found in Magnetococcus marinus (strain ATCC BAA-1437 / JCM 17883 / MC-1).